A 152-amino-acid chain; its full sequence is UPF0266 membrane protein plu2700 (152 aa).

3 helical membrane passes run 6–26 (IALT…EFVV), 45–65 (IDAL…ITVY), and 67–87 (SRLT…IAYI).

Belongs to the UPF0266 family.

The protein resides in the cell inner membrane. In Photorhabdus laumondii subsp. laumondii (strain DSM 15139 / CIP 105565 / TT01) (Photorhabdus luminescens subsp. laumondii), this protein is UPF0266 membrane protein plu2700.